A 92-amino-acid polypeptide reads, in one-letter code: UPF0250 protein XCC3453 (92 aa).

It belongs to the UPF0250 family.

This is UPF0250 protein XCC3453 from Xanthomonas campestris pv. campestris (strain ATCC 33913 / DSM 3586 / NCPPB 528 / LMG 568 / P 25).